We begin with the raw amino-acid sequence, 276 residues long: Type II pantothenate kinase (276 aa).

An ATP-binding site is contributed by 8-15 (DAGGTLTK). Catalysis depends on glutamate 76, which acts as the Proton acceptor. ATP is bound by residues threonine 105, 127 to 131 (GGTIM), phenylalanine 143, and serine 230.

It belongs to the type II pantothenate kinase family. In terms of assembly, homodimer.

It is found in the cytoplasm. The catalysed reaction is (R)-pantothenate + ATP = (R)-4'-phosphopantothenate + ADP + H(+). It functions in the pathway cofactor biosynthesis; coenzyme A biosynthesis; CoA from (R)-pantothenate: step 1/5. Its function is as follows. Catalyzes the phosphorylation of pantothenate (Pan), the first step in CoA biosynthesis. The protein is Type II pantothenate kinase of Bacillus cereus (strain ZK / E33L).